A 197-amino-acid chain; its full sequence is Recombination protein RecR (197 aa).

Residues 57–72 (CSVCFALTEQNPCPIC) form a C4-type zinc finger. One can recognise a Toprim domain in the interval 79-174 (SVICVVETSQ…RVTRLAHGIP (96 aa)).

The protein belongs to the RecR family.

May play a role in DNA repair. It seems to be involved in an RecBC-independent recombinational process of DNA repair. It may act with RecF and RecO. This is Recombination protein RecR from Trichlorobacter lovleyi (strain ATCC BAA-1151 / DSM 17278 / SZ) (Geobacter lovleyi).